Consider the following 489-residue polypeptide: Betaine aldehyde dehydrogenase (489 aa).

Residues threonine 26 and aspartate 93 each contribute to the K(+) site. 150 to 152 (GAW) serves as a coordination point for NAD(+). Residue lysine 162 is the Charge relay system of the active site. 176 to 179 (KPSE) lines the NAD(+) pocket. Residue valine 180 coordinates K(+). Position 229-232 (229-232 (GVET)) interacts with NAD(+). A K(+)-binding site is contributed by leucine 245. The Proton acceptor role is filled by glutamate 251. Glycine 253, cysteine 285, and glutamate 386 together coordinate NAD(+). The active-site Nucleophile is the cysteine 285. Cysteine 285 is subject to Cysteine sulfenic acid (-SOH). Residues lysine 456 and glycine 459 each coordinate K(+). Residue glutamate 463 is the Charge relay system of the active site.

The protein belongs to the aldehyde dehydrogenase family. As to quaternary structure, dimer of dimers. K(+) is required as a cofactor.

The catalysed reaction is betaine aldehyde + NAD(+) + H2O = glycine betaine + NADH + 2 H(+). It functions in the pathway amine and polyamine biosynthesis; betaine biosynthesis via choline pathway; betaine from betaine aldehyde: step 1/1. Functionally, involved in the biosynthesis of the osmoprotectant glycine betaine. Catalyzes the irreversible oxidation of betaine aldehyde to the corresponding acid. The sequence is that of Betaine aldehyde dehydrogenase from Burkholderia mallei (strain SAVP1).